We begin with the raw amino-acid sequence, 344 residues long: MIFGGAFDPLHQAHIYIAKRAVQAIKAQKLYFVPTAKAFFKSPIKASNQARLAMLRVALKALPQMAVSNFDIKAQNGFSFNTVQHFKQRFPNAELYFLIGSDKLSELAKWHNIEQLQKLCRFVCYERFGYPIDEQLVQQFNVRLLGKCPLDLASSEMFGSHKFRQIPAKVLHYIHQHNIYLKTILQTLLDEPRMQHCLRVGQLAKTLAVANKLDGKTAYTAGAYHDLAKQLPQAQLEKLAKVAGVNDYPSWKVLHSYAGAYILKHWYGLNNSAVFSAIWNHTVPPQKMSQLDMIIYLADKLEPMRVHEEWAKGIDITALVKLAKKDLKLAYQITLKYVRSLQKN.

Residues 1-182 are naMN adenylyltransferase; sequence MIFGGAFDPL…YIHQHNIYLK (182 aa). The interval 191 to 344 is ap4A hydrolase; that stretch reads EPRMQHCLRV…LKYVRSLQKN (154 aa). The HD domain occupies 193 to 304; sequence RMQHCLRVGQ…IYLADKLEPM (112 aa). Residue H196 coordinates ADP. Fe cation-binding residues include H196, H225, and D226. ADP contacts are provided by residues 226 to 229, H255, 281 to 282, D299, and R305; these read DLAK and HT. Position 299 (D299) interacts with Fe cation.

This sequence in the N-terminal section; belongs to the NadD family. It in the C-terminal section; belongs to the Ap4A hydrolase YqeK family.

The catalysed reaction is nicotinate beta-D-ribonucleotide + ATP + H(+) = deamido-NAD(+) + diphosphate. It carries out the reaction P(1),P(4)-bis(5'-adenosyl) tetraphosphate + H2O = 2 ADP + 2 H(+). The protein operates within cofactor biosynthesis; NAD(+) biosynthesis; deamido-NAD(+) from nicotinate D-ribonucleotide: step 1/1. Its function is as follows. Catalyzes the reversible adenylation of nicotinate mononucleotide (NaMN) to nicotinic acid adenine dinucleotide (NaAD). In terms of biological role, hydrolyzes diadenosine 5',5'''-P1,P4-tetraphosphate (Ap4A) to yield ADP. This chain is Probable nicotinate-nucleotide adenylyltransferase/Ap4A hydrolase, found in Mycoplasma pneumoniae (strain ATCC 29342 / M129 / Subtype 1) (Mycoplasmoides pneumoniae).